The following is a 288-amino-acid chain: MDKLIKTISESGSFRAYALDSTETVRTAQEKHNTLSSSTVALGRTLIANQILAANQKGDSKITVKVIGNGSFGHIISVADTKGHVKGYIQNPGVDIKKTATGEVLVGPFMGQGQFVSIIDYGTGNPYTSSTPLISGEIGEDFAYYLTESEQTPSAVGLNVLLDKEDKVKVAGGFMLQVLPGASEEEIARYEKRIQEMPAISTLLESDDHIEALLNAIYGDEPFKRLSEEELSFECDCSRERFENALLTLGKDELQAMKDEDHGAEIVCQFCQTKYEFSEADLEELIND.

2 disulfides stabilise this stretch: cysteine 235–cysteine 237 and cysteine 268–cysteine 271.

Belongs to the HSP33 family. Post-translationally, under oxidizing conditions two disulfide bonds are formed involving the reactive cysteines. Under reducing conditions zinc is bound to the reactive cysteines and the protein is inactive.

Its subcellular location is the cytoplasm. Functionally, redox regulated molecular chaperone. Protects both thermally unfolding and oxidatively damaged proteins from irreversible aggregation. Plays an important role in the bacterial defense system toward oxidative stress. In Streptococcus thermophilus (strain ATCC BAA-491 / LMD-9), this protein is 33 kDa chaperonin.